Consider the following 519-residue polypeptide: MSPSHAKLATVLLFDVATASADVGGTPSRLTKVARIADLLRRAAPNAALVAIVVSWLSGELRQRQIGVGWAALRSRPPAAAHPTLTVVAVDAAFAEIGAVAGKGAQARRAALLNALFAAATETEQTFLLRLLGGELRQGALAGIMADAVARAAGIPAAAVQRAAMLGGDLPAVAAAALSGEASALDAFTLRVGRPVAPMLAQTAAGVAQAIERHGGQAIFEAKLDGARVQIHRAGDQVTVYTRSLDDVTARLPEVVTATLALPVEALIADGEAIALRPDNSPQRFQVTASRFGRSLDVAAAVAAQPLSVFIFDILHCDGIDLLDAPTTDRLAALDALVPPAQRVDRLLTADPDAAGRFLEATLAAGHEGVMAKAPGAPYQAGRRGAGWLKVKPVHTLDLVVLAVEWGSGRRRGKLSNIHLGARDPATGEFVMVGKTFKGMTDAMLDWQTARFTELAVGGTDGYVVRVRPEQVVEVAVDGVQKSSRYPGGLALRFARVLRYRDDKGPAEADTIDAVRALY.

Glu-221 is a binding site for ATP. Catalysis depends on Lys-223, which acts as the N6-AMP-lysine intermediate. Positions 228, 243, 272, 312, 384, and 390 each coordinate ATP.

It belongs to the ATP-dependent DNA ligase family. It depends on Mg(2+) as a cofactor.

It carries out the reaction ATP + (deoxyribonucleotide)n-3'-hydroxyl + 5'-phospho-(deoxyribonucleotide)m = (deoxyribonucleotide)n+m + AMP + diphosphate.. In terms of biological role, DNA ligase that seals nicks in double-stranded DNA during DNA replication, DNA recombination and DNA repair. This Mycolicibacterium paratuberculosis (strain ATCC BAA-968 / K-10) (Mycobacterium paratuberculosis) protein is Probable DNA ligase.